The primary structure comprises 137 residues: Methylglyoxal synthase (137 aa).

The MGS-like domain occupies 1–137; the sequence is MKIALIAHDK…DLLRGEEPNV (137 aa). Substrate-binding positions include H8, K12, 34–37, and 54–55; these read TGTT and SG. D60 functions as the Proton donor/acceptor in the catalytic mechanism. H87 provides a ligand contact to substrate.

It belongs to the methylglyoxal synthase family.

The enzyme catalyses dihydroxyacetone phosphate = methylglyoxal + phosphate. In terms of biological role, catalyzes the formation of methylglyoxal from dihydroxyacetone phosphate. This chain is Methylglyoxal synthase, found in Bacillus subtilis (strain 168).